Reading from the N-terminus, the 134-residue chain is ATP synthase epsilon chain (134 aa).

It belongs to the ATPase epsilon chain family. F-type ATPases have 2 components, CF(1) - the catalytic core - and CF(0) - the membrane proton channel. CF(1) has five subunits: alpha(3), beta(3), gamma(1), delta(1), epsilon(1). CF(0) has three main subunits: a, b and c.

The protein localises to the cell membrane. Produces ATP from ADP in the presence of a proton gradient across the membrane. This is ATP synthase epsilon chain from Clostridium botulinum (strain Alaska E43 / Type E3).